A 78-amino-acid polypeptide reads, in one-letter code: Large ribosomal subunit protein bL28 (78 aa).

Belongs to the bacterial ribosomal protein bL28 family.

The polypeptide is Large ribosomal subunit protein bL28 (Prochlorococcus marinus (strain MIT 9211)).